Here is a 316-residue protein sequence, read N- to C-terminus: FAD:protein FMN transferase (316 aa).

FAD is bound by residues M14, A88–N90, and D146. A149 contributes to the Mg(2+) binding site. FAD contacts are provided by K152 and L231. Residues D257 and T261 each contribute to the Mg(2+) site.

The protein belongs to the ApbE family. Mg(2+) serves as cofactor.

It is found in the cytoplasm. The catalysed reaction is L-threonyl-[protein] + FAD = FMN-L-threonyl-[protein] + AMP + H(+). In terms of biological role, flavin transferase that catalyzes the transfer of the FMN moiety of FAD and its covalent binding to the hydroxyl group of a threonine residue in a target flavoprotein. Is responsible for the modification of the fumarate reductase KPK_2907. In Klebsiella pneumoniae (strain 342), this protein is FAD:protein FMN transferase.